Consider the following 434-residue polypeptide: UPF0597 protein CLD_2616 (434 aa).

Belongs to the UPF0597 family.

The sequence is that of UPF0597 protein CLD_2616 from Clostridium botulinum (strain Okra / Type B1).